Consider the following 122-residue polypeptide: Phosphoribosyl-ATP pyrophosphatase (122 aa).

Belongs to the PRA-PH family.

It is found in the cytoplasm. It catalyses the reaction 1-(5-phospho-beta-D-ribosyl)-ATP + H2O = 1-(5-phospho-beta-D-ribosyl)-5'-AMP + diphosphate + H(+). Its pathway is amino-acid biosynthesis; L-histidine biosynthesis; L-histidine from 5-phospho-alpha-D-ribose 1-diphosphate: step 2/9. In Burkholderia mallei (strain NCTC 10247), this protein is Phosphoribosyl-ATP pyrophosphatase.